The chain runs to 482 residues: Cardiolipin synthase (482 aa).

2 helical membrane passes run 4–24 (LAYL…VTVF) and 34–54 (WAWL…YLIF). 2 consecutive PLD phosphodiesterase domains span residues 217 to 244 (LNYR…GDEY) and 395 to 422 (DNGF…DFRS). Catalysis depends on residues histidine 222, lysine 224, aspartate 229, histidine 400, lysine 402, and aspartate 407.

Belongs to the phospholipase D family. Cardiolipin synthase subfamily.

Its subcellular location is the cell membrane. The catalysed reaction is 2 a 1,2-diacyl-sn-glycero-3-phospho-(1'-sn-glycerol) = a cardiolipin + glycerol. Functionally, catalyzes the reversible phosphatidyl group transfer from one phosphatidylglycerol molecule to another to form cardiolipin (CL) (diphosphatidylglycerol) and glycerol. This chain is Cardiolipin synthase (cls), found in Listeria monocytogenes serotype 4a (strain HCC23).